The chain runs to 287 residues: Protease HtpX (287 aa).

The next 2 helical transmembrane spans lie at 4–24 and 33–53; these read IFLLIATNFAILLVASIVMSI and GGLLVFAAIFGFGGSFISLAI. Histidine 139 is a binding site for Zn(2+). Glutamate 140 is an active-site residue. Histidine 143 serves as a coordination point for Zn(2+). Transmembrane regions (helical) follow at residues 154–174 and 195–215; these read LIQGVVNTFVIFAARVVAGII and AVVFVLDMLFGILASMIVAYF. Glutamate 220 contacts Zn(2+).

This sequence belongs to the peptidase M48B family. It depends on Zn(2+) as a cofactor.

Its subcellular location is the cell inner membrane. The protein is Protease HtpX of Shewanella frigidimarina (strain NCIMB 400).